A 175-amino-acid chain; its full sequence is SsrA-binding protein (175 aa).

Belongs to the SmpB family.

Its subcellular location is the cytoplasm. Required for rescue of stalled ribosomes mediated by trans-translation. Binds to transfer-messenger RNA (tmRNA), required for stable association of tmRNA with ribosomes. tmRNA and SmpB together mimic tRNA shape, replacing the anticodon stem-loop with SmpB. tmRNA is encoded by the ssrA gene; the 2 termini fold to resemble tRNA(Ala) and it encodes a 'tag peptide', a short internal open reading frame. During trans-translation Ala-aminoacylated tmRNA acts like a tRNA, entering the A-site of stalled ribosomes, displacing the stalled mRNA. The ribosome then switches to translate the ORF on the tmRNA; the nascent peptide is terminated with the 'tag peptide' encoded by the tmRNA and targeted for degradation. The ribosome is freed to recommence translation, which seems to be the essential function of trans-translation. The protein is SsrA-binding protein of Prochlorococcus marinus subsp. pastoris (strain CCMP1986 / NIES-2087 / MED4).